Here is a 316-residue protein sequence, read N- to C-terminus: UDP-N-acetylenolpyruvoylglucosamine reductase (316 aa).

One can recognise an FAD-binding PCMH-type domain in the interval 27–225 (VGGKAERFYR…KTAINALLKK (199 aa)). The active site involves Arg-190. Ser-239 acts as the Proton donor in catalysis. Residue Glu-309 is part of the active site.

It belongs to the MurB family. FAD is required as a cofactor.

The protein resides in the cytoplasm. It catalyses the reaction UDP-N-acetyl-alpha-D-muramate + NADP(+) = UDP-N-acetyl-3-O-(1-carboxyvinyl)-alpha-D-glucosamine + NADPH + H(+). The protein operates within cell wall biogenesis; peptidoglycan biosynthesis. In terms of biological role, cell wall formation. The protein is UDP-N-acetylenolpyruvoylglucosamine reductase of Coxiella burnetii (strain RSA 331 / Henzerling II).